Reading from the N-terminus, the 128-residue chain is Natriuretic peptides A (128 aa).

The segment at 36–84 (QVASEQNEEAGAVLSALPEVPSWPGEAGPAQREGGALGRGPWDSSDRSA) is disordered. A propeptide spanning residues 68–78 (EGGALGRGPWD) is cleaved from the precursor. S104 bears the Phosphoserine mark. C105 and C121 are joined by a disulfide. An important for degradation of atrial natriuretic peptide by IDE region spans residues 122 to 126 (NSFRY).

The protein belongs to the natriuretic peptide family. As to quaternary structure, homodimer; disulfide-linked antiparallel dimer. The precursor molecule is proteolytically cleaved by CORIN at Arg-98 to produce atrial natriuretic peptide. Undergoes further proteolytic cleavage by unknown proteases to give rise to long-acting natriuretic peptide, vessel dilator and kaliuretic peptide. Additional processing gives rise to the auriculin and atriopeptin peptides. In the kidneys, alternative processing by an unknown protease results in the peptide urodilatin. Post-translationally, cleavage by MME initiates degradation of the factor and thereby regulates its activity. Degraded by IDE (in vitro). During IDE degradation, the resulting products can temporarily stimulate NPR2 to produce cGMP, before the fragments are completely degraded and inactivated by IDE (in vitro). In terms of processing, degraded by IDE. Phosphorylation on Ser-104 decreases vasorelaxant activity.

The protein resides in the secreted. The protein localises to the perikaryon. It is found in the cell projection. In terms of biological role, hormone that plays a key role in mediating cardio-renal homeostasis, and is involved in vascular remodeling and regulating energy metabolism. Acts by specifically binding and stimulating NPR1 to produce cGMP, which in turn activates effector proteins, such as PRKG1, that drive various biological responses. Regulates vasodilation, natriuresis, diuresis and aldosterone synthesis and is therefore essential for regulating blood pressure, controlling the extracellular fluid volume and maintaining the fluid-electrolyte balance. Also involved in inhibiting cardiac remodeling and cardiac hypertrophy by inducing cardiomyocyte apoptosis and attenuating the growth of cardiomyocytes and fibroblasts. Plays a role in female pregnancy by promoting trophoblast invasion and spiral artery remodeling in uterus, and thus prevents pregnancy-induced hypertension. In adipose tissue, acts in various cGMP- and PKG-dependent pathways to regulate lipid metabolism and energy homeostasis. This includes up-regulating lipid metabolism and mitochondrial oxygen utilization by activating the AMP-activated protein kinase (AMPK), and increasing energy expenditure by acting via MAPK11 to promote the UCP1-dependent thermogenesis of brown adipose tissue. Binds the clearance receptor NPR3 which removes the hormone from circulation. Functionally, may have a role in cardio-renal homeostasis through regulation of natriuresis, diuresis, vasodilation, and inhibiting aldosterone synthesis. In vitro, promotes the production of cGMP and induces vasodilation. May promote natriuresis, at least in part, by enhancing prostaglandin E2 synthesis resulting in the inhibition of renal Na+-K+-ATPase. However reports on the involvement of this peptide in mammal blood volume and blood pressure homeostasis are conflicting; according to a report, in vivo it is not sufficient to activate cGMP and does not inhibit collecting duct transport nor effect diuresis and natriuresis. Appears to bind to specific receptors that are distinct from the receptors bound by atrial natriuretic peptide and vessel dilator. Possibly enhances protein excretion in urine by decreasing proximal tubular protein reabsorption. Its function is as follows. May have a role in cardio-renal homeostasis through regulation of natriuresis, diuresis, and vasodilation. In vitro, promotes the production of cGMP and induces vasodilation. May promote natriuresis, at least in part, by enhancing prostaglandin E2 synthesis resulting in the inhibition of renal Na+-K+-ATPase. However reports on the involvement of this peptide in mammal blood volume and blood pressure homeostasis are conflicting; according to a report it is not sufficient to activate cGMP and does not inhibit collecting duct transport nor effect diuresis and natriuresis. Appears to bind to specific receptors that are distinct from the receptors bound by the atrial natriuretic and long-acting natriuretic peptides. Possibly functions in protein excretion in urine by maintaining the integrity of the proximal tubules and enhancing protein excretion by decreasing proximal tubular protein reabsorption. May have a role in cardio-renal homeostasis through regulation of diuresis and inhibiting aldosterone synthesis. In vitro, promotes the production of cGMP and induces vasodilation. May promote natriuresis, at least in part, by enhancing prostaglandin E2 synthesis resulting in the inhibition of renal Na+-K+-ATPase. May have a role in potassium excretion but not sodium excretion (natriuresis). Possibly enhances protein excretion in urine by decreasing proximal tubular protein reabsorption. In terms of biological role, hormone produced in the kidneys that appears to be important for maintaining cardio-renal homeostasis. Mediates vasodilation, natriuresis and diuresis primarily in the renal system, in order to maintain the extracellular fluid volume and control the fluid-electrolyte balance. Specifically binds and stimulates cGMP production by renal transmembrane receptors, likely NPR1. Urodilatin not ANP, may be the natriuretic peptide responsible for the regulation of sodium and water homeostasis in the kidney. Functionally, may have a role in cardio-renal homeostasis through regulation of natriuresis and vasodilation. In vivo promotes natriuresis and in vitro, vasodilates renal artery strips. Its function is as follows. May have a role in cardio-renal homeostasis through regulation of regulation of natriuresis and vasodilation. In vivo promotes natriuresis. In vitro, vasodilates intestinal smooth muscle but not smooth muscle strips. May have a role in cardio-renal homeostasis through regulation of natriuresis and vasodilation. In vivo promotes natriuresis. In vitro, selectively vasodilates intestinal and vascular smooth muscle strips. In terms of biological role, may have a role in cardio-renal homeostasis through regulation of natriuresis and vasodilation. In vivo promotes natriuresis. In vitro, selectively vasodilates intestinal smooth muscle but not vascular smooth muscle strips. This Cavia porcellus (Guinea pig) protein is Natriuretic peptides A (NPPA).